A 336-amino-acid polypeptide reads, in one-letter code: Phenylalanine--tRNA ligase alpha subunit (336 aa).

Glu-263 provides a ligand contact to Mg(2+).

Belongs to the class-II aminoacyl-tRNA synthetase family. Phe-tRNA synthetase alpha subunit type 1 subfamily. Tetramer of two alpha and two beta subunits. It depends on Mg(2+) as a cofactor.

Its subcellular location is the cytoplasm. The enzyme catalyses tRNA(Phe) + L-phenylalanine + ATP = L-phenylalanyl-tRNA(Phe) + AMP + diphosphate + H(+). This chain is Phenylalanine--tRNA ligase alpha subunit, found in Thermosynechococcus vestitus (strain NIES-2133 / IAM M-273 / BP-1).